The sequence spans 212 residues: Adenylate kinase (212 aa).

ATP is bound at residue Gly10–Thr15. The interval Ser30–Val59 is NMP. AMP is bound by residues Thr31, Arg36, Glu57–Val59, Gly86–Arg89, and Gln93. Residues Gly127–Asp159 are LID. Residues Arg128 and Thr137 to Phe138 each bind ATP. 2 residues coordinate AMP: Arg156 and Arg167. Gln195 serves as a coordination point for ATP.

It belongs to the adenylate kinase family. As to quaternary structure, monomer.

It localises to the cytoplasm. The catalysed reaction is AMP + ATP = 2 ADP. The protein operates within purine metabolism; AMP biosynthesis via salvage pathway; AMP from ADP: step 1/1. In terms of biological role, catalyzes the reversible transfer of the terminal phosphate group between ATP and AMP. Plays an important role in cellular energy homeostasis and in adenine nucleotide metabolism. The chain is Adenylate kinase from Streptococcus pneumoniae (strain JJA).